We begin with the raw amino-acid sequence, 104 residues long: Vegetative-specific protein H7 (104 aa).

The 55-residue stretch at 43 to 97 folds into the HTH cro/C1-type domain; the sequence is IQRARNALKMTQKELAFKINERPGVINEYESGSAIPSQAVLSKLEKALNVKLRGK. A DNA-binding region (H-T-H motif) is located at residues 54–73; the sequence is QKELAFKINERPGVINEYES.

This is Vegetative-specific protein H7 (cinD-1) from Dictyostelium discoideum (Social amoeba).